The sequence spans 1979 residues: Myosin-11 (1979 aa).

S2 is modified (blocked amino end (Ser)). Residues 30-80 (SAKKLVWVPSEKHGFEAASIKEEKGDEVTVELQENGKKVTLSKDDIQKMNP) enclose the Myosin N-terminal SH3-like domain. The region spanning 84–789 (SKVEDMAELT…VLAHLEEERD (706 aa)) is the Myosin motor domain. Residue K128 is modified to N6,N6,N6-trimethyllysine. 177 to 184 (GESGAGKT) is a binding site for ATP. Actin-binding regions lie at residues 667 to 689 (LTKLMTTLRNTNPNFVRCIIPNH) and 768 to 782 (RIGQSKIFFRTGVLA). The region spanning 792 to 821 (ITDVIIAFQAQCRGYLARKAFAKRQQQLTA) is the IQ domain. The rodlike tail (S2 and LMM domains) stretch occupies residues 850-1979 (LLQVTRQEEE…DGDFNGKASE (1130 aa)). Residues 850–1979 (LLQVTRQEEE…DGDFNGKASE (1130 aa)) are a coiled coil. Disordered stretches follow at residues 1130–1150 (QEDLESEKAARNKAEKQKRDL), 1709–1736 (RKQADLEKEEMAEELASANSGRTSLQDE), and 1891–1979 (QLEE…KASE). The span at 1135-1150 (SEKAARNKAEKQKRDL) shows a compositional bias: basic and acidic residues. The segment covering 1968–1979 (GRDGDFNGKASE) has biased composition (basic and acidic residues).

This sequence belongs to the TRAFAC class myosin-kinesin ATPase superfamily. Myosin family. In terms of assembly, muscle myosin is a hexameric protein that consists of 2 heavy chain subunits (MHC), 2 alkali light chain subunits (MLC) and 2 regulatory light chain subunits (MLC-2).

The protein resides in the cytoplasm. It localises to the myofibril. Functionally, muscle contraction. This is Myosin-11 (MYH11) from Gallus gallus (Chicken).